The primary structure comprises 472 residues: L-fuculokinase (472 aa).

It belongs to the FGGY kinase family. The cofactor is a divalent metal cation.

The enzyme catalyses L-fuculose + ATP = L-fuculose 1-phosphate + ADP + H(+). It participates in carbohydrate degradation; L-fucose degradation; L-lactaldehyde and glycerone phosphate from L-fucose: step 2/3. In terms of biological role, catalyzes the phosphorylation of L-fuculose. Can also phosphorylate, with lower efficiency, D-ribulose, D-xylulose and D-fructose. The sequence is that of L-fuculokinase from Escherichia coli (strain K12).